We begin with the raw amino-acid sequence, 523 residues long: tRNA-2-methylthio-N(6)-dimethylallyladenosine synthase (523 aa).

The tract at residues 1 to 26 is disordered; that stretch reads MNEKQRLEQTGQIQTASHPADRKSDL. The segment covering 8-17 has biased composition (polar residues); sequence EQTGQIQTAS. Residues 80–198 form the MTTase N-terminal domain; it reads RKFYIRTYGC…LPYILHEAYM (119 aa). The [4Fe-4S] cluster site is built by Cys-89, Cys-125, Cys-159, Cys-235, Cys-239, and Cys-242. Positions 221-451 constitute a Radical SAM core domain; that stretch reads RKGNIKAWVN…NALVQEIAAK (231 aa). In terms of domain architecture, TRAM spans 454 to 517; sequence KQYEGQVVEV…TWTLTGELAN (64 aa).

Belongs to the methylthiotransferase family. MiaB subfamily. As to quaternary structure, monomer. [4Fe-4S] cluster serves as cofactor.

Its subcellular location is the cytoplasm. The enzyme catalyses N(6)-dimethylallyladenosine(37) in tRNA + (sulfur carrier)-SH + AH2 + 2 S-adenosyl-L-methionine = 2-methylsulfanyl-N(6)-dimethylallyladenosine(37) in tRNA + (sulfur carrier)-H + 5'-deoxyadenosine + L-methionine + A + S-adenosyl-L-homocysteine + 2 H(+). Catalyzes the methylthiolation of N6-(dimethylallyl)adenosine (i(6)A), leading to the formation of 2-methylthio-N6-(dimethylallyl)adenosine (ms(2)i(6)A) at position 37 in tRNAs that read codons beginning with uridine. This chain is tRNA-2-methylthio-N(6)-dimethylallyladenosine synthase, found in Geobacillus thermodenitrificans (strain NG80-2).